The following is a 342-amino-acid chain: Aromatic amino acid aminotransferase (342 aa).

Residue Lys-214 is modified to N6-(pyridoxal phosphate)lysine.

The protein belongs to the class-II pyridoxal-phosphate-dependent aminotransferase family. As to quaternary structure, homodimer. Pyridoxal 5'-phosphate is required as a cofactor.

It carries out the reaction an aromatic L-alpha-amino acid + 2-oxoglutarate = an aromatic oxo-acid + L-glutamate. Aminotransferase that catalyzes the conversion of aromatic amino acids and 2-oxoglutarate into corresponding aromatic oxo acids and L-glutamate. This chain is Aromatic amino acid aminotransferase, found in Corynebacterium efficiens (strain DSM 44549 / YS-314 / AJ 12310 / JCM 11189 / NBRC 100395).